A 102-amino-acid chain; its full sequence is Colipase-like protein 2 (102 aa).

Positions 1–23 are cleaved as a signal peptide; it reads MAFTQALVTVLALLAGTLPHRHS. Disulfide bonds link Cys36–Cys47, Cys42–Cys58, Cys46–Cys80, Cys68–Cys88, and Cys82–Cys99.

This sequence belongs to the colipase family.

It localises to the secreted. This chain is Colipase-like protein 2 (Clpsl2), found in Mus musculus (Mouse).